Here is an 861-residue protein sequence, read N- to C-terminus: Replication factor C subunit 1 (861 aa).

The segment at 1-103 (MVNISDFFGK…SSKSSDSASN (103 aa)) is disordered. A compositionally biased stretch (polar residues) spans 16–28 (RSSTSRPTRQVGS). At Thr-38 the chain carries Phosphothreonine. The residue at position 40 (Ser-40) is a Phosphoserine. Phosphothreonine is present on Thr-63. Positions 153 to 243 (GKPNCLLGLT…PAEGGDGEAA (91 aa)) constitute a BRCT domain. Residues Thr-299, Cys-311, 353–361 (GPPGIGKTT), and Asn-456 contribute to the ATP site. A disordered region spans residues 788–861 (STIGGGGVGT…GGSKKRKTKA (74 aa)). Over residues 803–823 (DFEDVVDADDNPVPADDEETQ) the composition is skewed to acidic residues. 2 consecutive short sequence motifs (nuclear localization signal) follow at residues 830–834 (KKDKL) and 855–860 (KKRKTK). Residues 836–861 (KQKAKPTKRKTATSKPGGSKKRKTKA) show a composition bias toward basic residues.

This sequence belongs to the activator 1 large subunit family. Replication factor C (RFC) is a heteropentamer of subunits RFC1, RFC2, RFC3, RFC4 and RFC5 and forms a complex with POL30/PCNA in the presence of ATP. Interacts with ECO1 and POL30/PCNA.

It localises to the nucleus. Functionally, component of the ATP-dependent clamp loader RFC complex for the POL30/PCNA homotrimer DNA clamp. During a clamp loading circle, the RFC:clamp complex binds to DNA and the recognition of the double-stranded/single-stranded junction stimulates ATP hydrolysis by RFC. The complex presumably provides bipartite ATP sites in which one subunit supplies a catalytic site for hydrolysis of ATP bound to the neighboring subunit. Dissociation of RFC from the clamp leaves the clamp encircling DNA. Replication factor C (RFC or activator 1) complex acts during elongation of primed DNA templates by DNA polymerase delta and epsilon. RFC has an essential but redundant activity in sister chromatid cohesion establishment. In Saccharomyces cerevisiae (strain ATCC 204508 / S288c) (Baker's yeast), this protein is Replication factor C subunit 1 (RFC1).